A 224-amino-acid polypeptide reads, in one-letter code: uncharacterized protein (224 aa).

This is an uncharacterized protein from Acidianus hospitalis (AFV-1).